A 271-amino-acid chain; its full sequence is Histone chaperone asf-1 (271 aa).

The disordered stretch occupies residues 152-271 (KWDSEASAPP…PKQQGMAMAQ (120 aa)). Acidic residues-rich tracts occupy residues 168–185 (PEAD…DELA) and 211–258 (IEED…EMEI).

It belongs to the ASF1 family. In terms of assembly, interacts with histone H3 and histone H4.

It localises to the nucleus. Histone chaperone that facilitates histone deposition and histone exchange and removal during nucleosome assembly and disassembly. This chain is Histone chaperone asf-1 (asf-1), found in Neurospora crassa (strain ATCC 24698 / 74-OR23-1A / CBS 708.71 / DSM 1257 / FGSC 987).